The chain runs to 62 residues: Large ribosomal subunit protein bL28 (62 aa).

The disordered stretch occupies residues 1–27 (MARKCVVTGRQTRSGNQRSHAMNSNKR). Residues 9–26 (GRQTRSGNQRSHAMNSNK) are compositionally biased toward polar residues.

Belongs to the bacterial ribosomal protein bL28 family.

The sequence is that of Large ribosomal subunit protein bL28 from Oceanobacillus iheyensis (strain DSM 14371 / CIP 107618 / JCM 11309 / KCTC 3954 / HTE831).